We begin with the raw amino-acid sequence, 346 residues long: Sensor histidine kinase GraS (346 aa).

2 helical membrane passes run 15 to 35 (MNWI…SLID) and 43 to 63 (LFYI…LTYF). In terms of domain architecture, Histidine kinase spans 126–332 (EFVHDIKTPV…TVRLIFPLQN (207 aa)).

Interacts with GraX.

It localises to the cell membrane. The enzyme catalyses ATP + protein L-histidine = ADP + protein N-phospho-L-histidine.. In terms of biological role, member of the two-component regulatory system GraR/GraS involved in resistance against cationic antimicrobial peptides (CAMPs). Functions as a sensor protein kinase which phosphorylates GraR through the auxiliary protein GraX. In turn, GraR up-regulates many genes such as adhesins, exoproteins, transporters, toxins, and proteins involved in cell wall synthesis. Down-regulates the expression of many genes involved in RNA and amino acid synthesis or glycolysis. This is Sensor histidine kinase GraS (graS) from Staphylococcus aureus (strain COL).